Here is a 279-residue protein sequence, read N- to C-terminus: NLP effector protein 9 (279 aa).

Residues 1–19 (MKISNLLGVLVVFLAVVKG) form the signal peptide. Residues 151 to 161 (AIMYAWYFPDI) carry the Conserved undecapeptide motif motif. The N-linked (GlcNAc...) asparagine glycan is linked to Asn176.

Belongs to the Necrosis inducing protein (NPP1) family.

It is found in the secreted. Secreted effector that acts as a pathogen-associated molecular pattern (PAMP) recognized by the plant immune system. Seems not to induce necrosis in Nicotiana benthamiana leaves. In Plasmopara viticola (Downy mildew of grapevine), this protein is NLP effector protein 9.